The sequence spans 187 residues: Elongation factor P (187 aa).

Belongs to the elongation factor P family.

Its subcellular location is the cytoplasm. The protein operates within protein biosynthesis; polypeptide chain elongation. Its function is as follows. Involved in peptide bond synthesis. Stimulates efficient translation and peptide-bond synthesis on native or reconstituted 70S ribosomes in vitro. Probably functions indirectly by altering the affinity of the ribosome for aminoacyl-tRNA, thus increasing their reactivity as acceptors for peptidyl transferase. In Helicobacter pylori (strain J99 / ATCC 700824) (Campylobacter pylori J99), this protein is Elongation factor P (efp).